A 298-amino-acid chain; its full sequence is ATP phosphoribosyltransferase (298 aa).

It belongs to the ATP phosphoribosyltransferase family. Long subfamily. The cofactor is Mg(2+).

It is found in the cytoplasm. It catalyses the reaction 1-(5-phospho-beta-D-ribosyl)-ATP + diphosphate = 5-phospho-alpha-D-ribose 1-diphosphate + ATP. The protein operates within amino-acid biosynthesis; L-histidine biosynthesis; L-histidine from 5-phospho-alpha-D-ribose 1-diphosphate: step 1/9. With respect to regulation, feedback inhibited by histidine. Catalyzes the condensation of ATP and 5-phosphoribose 1-diphosphate to form N'-(5'-phosphoribosyl)-ATP (PR-ATP). Has a crucial role in the pathway because the rate of histidine biosynthesis seems to be controlled primarily by regulation of HisG enzymatic activity. The sequence is that of ATP phosphoribosyltransferase from Aliivibrio fischeri (strain ATCC 700601 / ES114) (Vibrio fischeri).